Here is an 86-residue protein sequence, read N- to C-terminus: MNSKIFAVLLLLAFLSCVLSDQYCPKSSITACKKMNIRNDCCKDDDCTGGSWCCATPCGNICKYPTDRPGGKRAAGGKSCKTGYVY.

The signal sequence occupies residues 1 to 20 (MNSKIFAVLLLLAFLSCVLS). A WAP domain is found at 21–66 (DQYCPKSSITACKKMNIRNDCCKDDDCTGGSWCCATPCGNICKYPT). 5 disulfide bridges follow: Cys24-Cys54, Cys32-Cys58, Cys41-Cys53, Cys42-Cys80, and Cys47-Cys62.

It belongs to the venom protein 11 family. 01 (wap-1) subfamily. In terms of processing, contains 5 disulfide bonds. Expressed by the venom gland.

It is found in the secreted. Its function is as follows. Has antibacterial activity. The sequence is that of U15-lycotoxin-Ls1c from Lycosa singoriensis (Wolf spider).